The following is a 327-amino-acid chain: tRNA uridine(34) hydroxylase (327 aa).

In terms of domain architecture, Rhodanese spans 130–224; it reads LDEDTVVLDT…YGKDPEVQGE (95 aa). Cys-184 functions as the Cysteine persulfide intermediate in the catalytic mechanism.

This sequence belongs to the TrhO family.

It catalyses the reaction uridine(34) in tRNA + AH2 + O2 = 5-hydroxyuridine(34) in tRNA + A + H2O. Its function is as follows. Catalyzes oxygen-dependent 5-hydroxyuridine (ho5U) modification at position 34 in tRNAs. The protein is tRNA uridine(34) hydroxylase of Streptococcus thermophilus (strain ATCC BAA-250 / LMG 18311).